The following is a 458-amino-acid chain: Argininosuccinate lyase (458 aa).

Belongs to the lyase 1 family. Argininosuccinate lyase subfamily.

The protein resides in the cytoplasm. The enzyme catalyses 2-(N(omega)-L-arginino)succinate = fumarate + L-arginine. It participates in amino-acid biosynthesis; L-arginine biosynthesis; L-arginine from L-ornithine and carbamoyl phosphate: step 3/3. The polypeptide is Argininosuccinate lyase (Acetivibrio thermocellus (strain ATCC 27405 / DSM 1237 / JCM 9322 / NBRC 103400 / NCIMB 10682 / NRRL B-4536 / VPI 7372) (Clostridium thermocellum)).